The chain runs to 205 residues: Small ribosomal subunit protein uS4 (205 aa).

The segment at Asn18 to Ser46 is disordered. In terms of domain architecture, S4 RNA-binding spans Arg94 to Leu154.

Belongs to the universal ribosomal protein uS4 family. As to quaternary structure, part of the 30S ribosomal subunit. Contacts protein S5. The interaction surface between S4 and S5 is involved in control of translational fidelity.

In terms of biological role, one of the primary rRNA binding proteins, it binds directly to 16S rRNA where it nucleates assembly of the body of the 30S subunit. With S5 and S12 plays an important role in translational accuracy. The polypeptide is Small ribosomal subunit protein uS4 (Bradyrhizobium sp. (strain ORS 278)).